Here is a 143-residue protein sequence, read N- to C-terminus: Nucleoside diphosphate kinase (143 aa).

6 residues coordinate ATP: Lys11, Phe59, Arg87, Thr93, Arg104, and Asn114. The active-site Pros-phosphohistidine intermediate is His117.

It belongs to the NDK family. As to quaternary structure, homotetramer. Mg(2+) is required as a cofactor.

The protein resides in the cytoplasm. It catalyses the reaction a 2'-deoxyribonucleoside 5'-diphosphate + ATP = a 2'-deoxyribonucleoside 5'-triphosphate + ADP. The catalysed reaction is a ribonucleoside 5'-diphosphate + ATP = a ribonucleoside 5'-triphosphate + ADP. Functionally, major role in the synthesis of nucleoside triphosphates other than ATP. The ATP gamma phosphate is transferred to the NDP beta phosphate via a ping-pong mechanism, using a phosphorylated active-site intermediate. In Salmonella agona (strain SL483), this protein is Nucleoside diphosphate kinase.